The sequence spans 2116 residues: Myosin-2 heavy chain (2116 aa).

The 53-residue stretch at 30 to 82 (SDKRYIWYNPDPKERDSYECGEIVSETSDSFTFKTVDGQDRQVKKDDANQRNP) folds into the Myosin N-terminal SH3-like domain. The 674-residue stretch at 86–759 (DGVEDMSELS…QLARIEEARE (674 aa)) folds into the Myosin motor domain. The residue at position 130 (Lys-130) is an N6,N6-dimethyllysine. 179–186 (GESGAGKT) provides a ligand contact to ATP. Actin-binding regions lie at residues 638 to 660 (LASL…IPNN) and 738 to 752 (RFGI…GQLA). One can recognise an IQ domain in the interval 762-791 (ISEIIKAIQAATRGWIARKVYKQAREHTVA). Positions 817-2116 (ARPLLKRRNF…MADFFGGFKA (1300 aa)) form a coiled coil. Disordered regions lie at residues 1295-1314 (VNEQ…KRKV), 1363-1399 (DKSV…SKKK), 1415-1444 (TAKK…DAKN), 1711-1731 (VRDQ…SKRR), 1771-1791 (LEDE…LESE), and 1805-1844 (NRSR…AAKL). 3 stretches are compositionally biased toward basic and acidic residues: residues 1375–1399 (KNEE…SKKK), 1415–1443 (TAKK…DDAK), and 1722–1731 (RSELEDSKRR). A compositionally biased stretch (basic and acidic residues) spans 1805–1832 (NRSRAEKDRKKYEKDLKDTKYKLNDEAA). Phosphothreonine; by MHCK is present on residues Thr-1823, Thr-1833, and Thr-2029.

This sequence belongs to the TRAFAC class myosin-kinesin ATPase superfamily. Myosin family. In terms of assembly, myosin-2 heavy chain is two-headed. It self-assembles into filaments. Hexamer of 2 heavy chain subunits (MHC), 2 alkali light chain subunits (MLC) and 2 regulatory light chain subunits (MLC-2). Associates with elmoA. Phosphorylation inhibits thick filament formation and reduces the actin-activated ATPase activity.

Its subcellular location is the cytoplasm. It is found in the cell cortex. In terms of biological role, myosin is a protein that binds to actin and has ATPase activity that is activated by actin. In Dictyostelium discoideum (Social amoeba), this protein is Myosin-2 heavy chain (mhcA).